The sequence spans 355 residues: dTDP-D-glucose 4,6-dehydratase (355 aa).

Residue T142 coordinates substrate. D143 serves as the catalytic Proton donor. Active-site proton acceptor residues include E144 and Y166.

The protein belongs to the NAD(P)-dependent epimerase/dehydratase family. dTDP-glucose dehydratase subfamily. It depends on NAD(+) as a cofactor.

The enzyme catalyses dTDP-alpha-D-glucose = dTDP-4-dehydro-6-deoxy-alpha-D-glucose + H2O. This chain is dTDP-D-glucose 4,6-dehydratase (TGDS), found in Bos taurus (Bovine).